A 96-amino-acid polypeptide reads, in one-letter code: Muconolactone Delta-isomerase 2 (96 aa).

This sequence belongs to the muconolactone Delta-isomerase family. Homodecamer.

It catalyses the reaction (S)-muconolactone = (4,5-dihydro-5-oxofuran-2-yl)-acetate. It functions in the pathway aromatic compound metabolism; beta-ketoadipate pathway; 5-oxo-4,5-dihydro-2-furylacetate from catechol: step 3/3. The sequence is that of Muconolactone Delta-isomerase 2 (catC2) from Acinetobacter lwoffii.